The following is a 70-amino-acid chain: Large ribosomal subunit protein uL29 (70 aa).

This sequence belongs to the universal ribosomal protein uL29 family.

The polypeptide is Large ribosomal subunit protein uL29 (Prochlorococcus marinus (strain MIT 9303)).